We begin with the raw amino-acid sequence, 431 residues long: MRIVIKNGIVIDGFGGEEKADILINYGIIKGIDKNIDVSDAIVIDAEGKYVLPGFVDMHTHLRQPGFEEKETIRTGTESAAAGGFTTVACMPNTNPPIDSEVVVEYVKAVAQREGVVKVLPIGAMTKGMKGEEITEMAKLKKAGVVALSDDGFPIMSAGIMKRVMTYGKMYDLLMITHCEDKTLSGEGVMNSGIIATMLGLKGIPREAEEVMLARNIILAKATGAKLHIAHVSTKGSVELIRRAKEEGVSITAEVTPHHLTRTDEAVYNYDTNTKVFPPLRTREDVEALIEGLKDGTIDAIATDHAPHTKDDKKVPYDMAPFGISGLETAFSVINTFLIQTGIITMKALVNYMSMNPARILGISNGIRVGATADIVIVNPHEEYTVDKEKFKSKGKNTPYHGMKLKGVVEYTIVEGQIRYQKNKKFEKVEI.

2 residues coordinate Zn(2+): His59 and His61. Residues 61 to 63 (HLR) and Asn93 each bind substrate. The Zn(2+) site is built by Asp151, His178, His231, and Asp304. The active site involves Asp304. Residues His308 and 322–323 (FG) each bind substrate.

The protein belongs to the metallo-dependent hydrolases superfamily. DHOase family. Class I DHOase subfamily. Zn(2+) serves as cofactor.

The enzyme catalyses (S)-dihydroorotate + H2O = N-carbamoyl-L-aspartate + H(+). It functions in the pathway pyrimidine metabolism; UMP biosynthesis via de novo pathway; (S)-dihydroorotate from bicarbonate: step 3/3. Catalyzes the reversible cyclization of carbamoyl aspartate to dihydroorotate. The protein is Dihydroorotase of Caldanaerobacter subterraneus subsp. tengcongensis (strain DSM 15242 / JCM 11007 / NBRC 100824 / MB4) (Thermoanaerobacter tengcongensis).